A 326-amino-acid polypeptide reads, in one-letter code: Tryptophan--tRNA ligase (326 aa).

Residues 11–13 (QPT) and 19–20 (GN) each bind ATP. The short motif at 12-20 (PTGQIHLGN) is the 'HIGH' region element. Asp135 contacts L-tryptophan. Residues 147 to 149 (GED), Val186, and 195 to 199 (KMSKS) contribute to the ATP site. Residues 195 to 199 (KMSKS) carry the 'KMSKS' region motif.

It belongs to the class-I aminoacyl-tRNA synthetase family. In terms of assembly, homodimer.

It is found in the cytoplasm. The enzyme catalyses tRNA(Trp) + L-tryptophan + ATP = L-tryptophyl-tRNA(Trp) + AMP + diphosphate + H(+). Functionally, catalyzes the attachment of tryptophan to tRNA(Trp). This Helicobacter pylori (strain J99 / ATCC 700824) (Campylobacter pylori J99) protein is Tryptophan--tRNA ligase.